An 859-amino-acid polypeptide reads, in one-letter code: DNA mismatch repair protein MutS (859 aa).

Residue 617-624 coordinates ATP; sequence GPNMGGKS. A disordered region spans residues 799–821; that stretch reads ETTSLPHEQPRAKPGKPAVPQQS.

This sequence belongs to the DNA mismatch repair MutS family.

Functionally, this protein is involved in the repair of mismatches in DNA. It is possible that it carries out the mismatch recognition step. This protein has a weak ATPase activity. This is DNA mismatch repair protein MutS from Pseudomonas savastanoi pv. phaseolicola (strain 1448A / Race 6) (Pseudomonas syringae pv. phaseolicola (strain 1448A / Race 6)).